We begin with the raw amino-acid sequence, 213 residues long: Na(+)-translocating NADH-quinone reductase subunit E (213 aa).

6 consecutive transmembrane segments (helical) span residues 12–32 (AVFV…FLAV), 40–60 (IGLG…NQLI), 92–112 (FLGF…LEMF), 124–144 (LGIF…SLFM), 155–175 (VVFG…LAGI), and 191–211 (LGIT…FSGI).

It belongs to the NqrDE/RnfAE family. In terms of assembly, composed of six subunits; NqrA, NqrB, NqrC, NqrD, NqrE and NqrF.

It is found in the cell inner membrane. It carries out the reaction a ubiquinone + n Na(+)(in) + NADH + H(+) = a ubiquinol + n Na(+)(out) + NAD(+). NQR complex catalyzes the reduction of ubiquinone-1 to ubiquinol by two successive reactions, coupled with the transport of Na(+) ions from the cytoplasm to the periplasm. NqrA to NqrE are probably involved in the second step, the conversion of ubisemiquinone to ubiquinol. The polypeptide is Na(+)-translocating NADH-quinone reductase subunit E (Rhodopirellula baltica (strain DSM 10527 / NCIMB 13988 / SH1)).